Consider the following 311-residue polypeptide: Beta-lactamase (311 aa).

The segment at residues 1–36 (MRKPTSSLTRRSVLGAGLGLGGALALGSTTASAASA) is a signal peptide (tat-type signal). The Acyl-ester intermediate role is filled by Ser86. 252-254 (KSG) serves as a coordination point for substrate.

This sequence belongs to the class-A beta-lactamase family. Predicted to be exported by the Tat system. The position of the signal peptide cleavage has not been experimentally proven.

The catalysed reaction is a beta-lactam + H2O = a substituted beta-amino acid. Functionally, hydrolyzes benzylpenicillin and cloxacillin (at 10% of the rate of benzylpenicillin). The chain is Beta-lactamase (bla) from Streptomyces cellulosae.